Reading from the N-terminus, the 315-residue chain is Cytochrome bo(3) ubiquinol oxidase subunit 2 (315 aa).

Positions 1–24 (MRLRKYNKSLGWLSLFAGTVLLSG) are cleaved as a signal peptide. Residue Cys25 is the site of N-palmitoyl cysteine attachment. Cys25 is lipidated: S-diacylglycerol cysteine. The Periplasmic portion of the chain corresponds to 25 to 50 (CNSALLDPKGQIGLEQRSLILTAFGL). The chain crosses the membrane as a helical span at residues 51-68 (MLIVVIPAILMAVGFAWK). Residues 69-92 (YRASNKDAKYSPNWSHSNKVEAVV) lie on the Cytoplasmic side of the membrane. The helical transmembrane segment at 93–111 (WTVPILIIIFLAVLTWKTT) threads the bilayer. The Periplasmic portion of the chain corresponds to 112–315 (HALEPSKPLA…MDMSHAESAH (204 aa)). Positions 288–315 (MDMTQPEGEHSAHEGMEGMDMSHAESAH) are disordered. Residues 294 to 315 (EGEHSAHEGMEGMDMSHAESAH) show a composition bias toward basic and acidic residues.

The protein belongs to the cytochrome c oxidase subunit 2 family. As to quaternary structure, heterooctamer of two A chains, two B chains, two C chains and two D chains.

The protein resides in the cell inner membrane. In terms of biological role, cytochrome bo(3) ubiquinol terminal oxidase is the component of the aerobic respiratory chain of E.coli that predominates when cells are grown at high aeration. Has proton pump activity across the membrane in addition to electron transfer, pumping 2 protons/electron. This chain is Cytochrome bo(3) ubiquinol oxidase subunit 2 (cyoA), found in Escherichia coli O6:H1 (strain CFT073 / ATCC 700928 / UPEC).